The chain runs to 288 residues: Homoserine kinase (288 aa).

Residue 78–88 coordinates ATP; that stretch reads PLARGLGSSSS.

Belongs to the GHMP kinase family. Homoserine kinase subfamily.

It is found in the cytoplasm. The enzyme catalyses L-homoserine + ATP = O-phospho-L-homoserine + ADP + H(+). The protein operates within amino-acid biosynthesis; L-threonine biosynthesis; L-threonine from L-aspartate: step 4/5. Functionally, catalyzes the ATP-dependent phosphorylation of L-homoserine to L-homoserine phosphate. The polypeptide is Homoserine kinase (Streptococcus agalactiae serotype III (strain NEM316)).